The chain runs to 100 residues: Large ribosomal subunit protein uL23 (100 aa).

It belongs to the universal ribosomal protein uL23 family. In terms of assembly, part of the 50S ribosomal subunit. Contacts protein L29, and trigger factor when it is bound to the ribosome.

In terms of biological role, one of the early assembly proteins it binds 23S rRNA. One of the proteins that surrounds the polypeptide exit tunnel on the outside of the ribosome. Forms the main docking site for trigger factor binding to the ribosome. The polypeptide is Large ribosomal subunit protein uL23 (Prochlorococcus marinus (strain MIT 9313)).